A 133-amino-acid polypeptide reads, in one-letter code: Small ribosomal subunit protein mS23 (133 aa).

Belongs to the mitochondrion-specific ribosomal protein mS23 family. Component of the mitochondrial ribosome small subunit (28S) which comprises a 12S rRNA and about 30 distinct proteins.

The protein localises to the mitochondrion. In Caenorhabditis elegans, this protein is Small ribosomal subunit protein mS23 (mrps-23).